The sequence spans 420 residues: Transcription factor bHLH89 (420 aa).

Residues 196–216 form a disordered region; that stretch reads EENNNLDDGLNRKGRGSKKRK. A compositionally biased stretch (basic residues) spans 207–216; sequence RKGRGSKKRK. A bHLH domain is found at 212–261; sequence SKKRKIFPTERERRVHFKDRFGDLKNLIPNPTKNDRASIVGEAIDYIKEL.

As to quaternary structure, homodimer. As to expression, flowers.

The protein resides in the nucleus. The protein is Transcription factor bHLH89 (BHLH89) of Arabidopsis thaliana (Mouse-ear cress).